The following is a 337-amino-acid chain: Holliday junction branch migration complex subunit RuvB (337 aa).

The large ATPase domain (RuvB-L) stretch occupies residues 1-182 (MEDRMVSASY…FGVLSAMEFY (182 aa)). Residues leucine 21, arginine 22, glycine 63, lysine 66, threonine 67, threonine 68, arginine 172, tyrosine 182, and arginine 219 each contribute to the ATP site. Residue threonine 67 participates in Mg(2+) binding. Residues 183 to 253 (NEDELKEIIL…IAKNALSLLE (71 aa)) form a small ATPAse domain (RuvB-S) region. The segment at 256–337 (GEGFDKIDNK…REFKEQTKLT (82 aa)) is head domain (RuvB-H). DNA-binding residues include arginine 311 and arginine 316.

It belongs to the RuvB family. Homohexamer. Forms an RuvA(8)-RuvB(12)-Holliday junction (HJ) complex. HJ DNA is sandwiched between 2 RuvA tetramers; dsDNA enters through RuvA and exits via RuvB. An RuvB hexamer assembles on each DNA strand where it exits the tetramer. Each RuvB hexamer is contacted by two RuvA subunits (via domain III) on 2 adjacent RuvB subunits; this complex drives branch migration. In the full resolvosome a probable DNA-RuvA(4)-RuvB(12)-RuvC(2) complex forms which resolves the HJ.

It is found in the cytoplasm. The enzyme catalyses ATP + H2O = ADP + phosphate + H(+). In terms of biological role, the RuvA-RuvB-RuvC complex processes Holliday junction (HJ) DNA during genetic recombination and DNA repair, while the RuvA-RuvB complex plays an important role in the rescue of blocked DNA replication forks via replication fork reversal (RFR). RuvA specifically binds to HJ cruciform DNA, conferring on it an open structure. The RuvB hexamer acts as an ATP-dependent pump, pulling dsDNA into and through the RuvAB complex. RuvB forms 2 homohexamers on either side of HJ DNA bound by 1 or 2 RuvA tetramers; 4 subunits per hexamer contact DNA at a time. Coordinated motions by a converter formed by DNA-disengaged RuvB subunits stimulates ATP hydrolysis and nucleotide exchange. Immobilization of the converter enables RuvB to convert the ATP-contained energy into a lever motion, pulling 2 nucleotides of DNA out of the RuvA tetramer per ATP hydrolyzed, thus driving DNA branch migration. The RuvB motors rotate together with the DNA substrate, which together with the progressing nucleotide cycle form the mechanistic basis for DNA recombination by continuous HJ branch migration. Branch migration allows RuvC to scan DNA until it finds its consensus sequence, where it cleaves and resolves cruciform DNA. The protein is Holliday junction branch migration complex subunit RuvB of Clostridium novyi (strain NT).